Consider the following 784-residue polypeptide: Toll-like receptor 2 (784 aa).

The N-terminal stretch at 1-20 (MPRALWPAWVWAIIILSMEG) is a signal peptide. The Extracellular portion of the chain corresponds to 21 to 587 (ASDKASSLSC…ARLSLSECHR (567 aa)). Cys-30 and Cys-36 form a disulfide bridge. 19 LRR repeats span residues 54–77 (VKSLDLSNNEITYVGNRDLQRCVN), 78–101 (LKTLRLGANEIHTVEEDSFFHLRN), 102–125 (LEYLDLSYNRLSNLSSSWFRSLYV), 126–150 (LKFLNLLGNLYKTLGETSLFSHLPD), 151–175 (LRTLKVGNSNSFTEIHEKDFTGLTF), 176–199 (LEELEISAQNLQIYVPKSLKSIQN), 200–223 (ISHLILHLKQPVLLVDILVDIVSS), 224–250 (LDCLELRDTNLHTFHFSEASISEMSTS), 251–278 (VKKLIFRNVQFTDESFVEVVKLFNYVSG), 279–308 (IVEVEFDDCTHDGIGDFRALSLDRIRHLGN), 309–337 (VETLTIRKLHIPQFFLFQDLSSIYPLTGK), 338–361 (VKRVTIENSKVFLVPCLLSQHLKS), 362–388 (LEYLDLSENLMSEETLKNSACKDAWPF), 389–414 (LQTLVLRQNRLKSLEKTGELLLTLKN), 415–437 (LNNLDISKNNFLSMPETCQWPGK), 438–457 (MKQLNLSSTKIRSLTQCLPQ), 458–478 (TLEILDVSNNNLDSFSLILPQ), 479–500 (LKELYISRNKLKTLPDASFLPV), and 501–524 (LSVMGISKNIINTFSKEQLDSFQQ). The N-linked (GlcNAc...) asparagine glycan is linked to Asn-114. An N-linked (GlcNAc...) asparagine glycan is attached at Asn-199. A disulfide bridge connects residues Cys-353 and Cys-382. Cys-432 and Cys-454 are oxidised to a cystine. N-linked (GlcNAc...) asparagine glycosylation is present at Asn-442. Residues 525-579 (LKTLEAGGNNFICSCDFLSFTQGQQALGRVLVDWPDDYRCDSPSHVRGQRLQDAR) form the LRRCT domain. A helical transmembrane segment spans residues 588–608 (AAVVSAACCALFLFLLLTGVL). At 609-784 (CHRFHGLWYM…WLNLRAAIRS (176 aa)) the chain is on the cytoplasmic side. One can recognise a TIR domain in the interval 639–782 (ICYDAFVSYS…GFWLNLRAAI (144 aa)). Lys-754 is covalently cross-linked (Glycyl lysine isopeptide (Lys-Gly) (interchain with G-Cter in ubiquitin)). The ATG16L1-binding motif motif lies at 761-778 (YLEWPLDETQQEGFWLNL).

This sequence belongs to the Toll-like receptor family. In terms of assembly, interacts with LY96, TLR1 and TLR6 (via extracellular domain). TLR2 seems to exist in heterodimers with either TLR1 or TLR6 before stimulation by the ligand. The heterodimers form bigger oligomers in response to their corresponding ligands as well as further heterotypic associations with other receptors such as CD14 and/or CD36. Binds MYD88 (via TIR domain). Interacts with TICAM1. Interacts with CNPY3. Interacts with ATG16L1. Interacts with PPP1R11. Interacts with TICAM2. Interacts with TIRAP. Ubiquitinated at Lys-754 by PPP1R11, leading to its degradation. Deubiquitinated by USP2. In terms of processing, glycosylation of Asn-442 is critical for secretion of the N-terminal ectodomain of TLR2.

It localises to the membrane. The protein resides in the cytoplasmic vesicle. The protein localises to the phagosome membrane. It is found in the membrane raft. Functionally, cooperates with LY96 to mediate the innate immune response to bacterial lipoproteins and other microbial cell wall components. Cooperates with TLR1 or TLR6 to mediate the innate immune response to bacterial lipoproteins or lipopeptides. Acts via MYD88 and TRAF6, leading to NF-kappa-B activation, cytokine secretion and the inflammatory response. May also promote apoptosis in response to lipoproteins. Forms activation clusters composed of several receptors depending on the ligand, these clusters trigger signaling from the cell surface and subsequently are targeted to the Golgi in a lipid-raft dependent pathway. Forms the cluster TLR2:TLR6:CD14:CD36 in response to diacylated lipopeptides and TLR2:TLR1:CD14 in response to triacylated lipopeptides. This chain is Toll-like receptor 2 (TLR2), found in Boselaphus tragocamelus (Nilgai).